We begin with the raw amino-acid sequence, 131 residues long: uncharacterized protein (131 aa).

The interval 15–43 (QLQAEHGSAPSNIASGPSSNQQQQEVQDE) is disordered. The span at 23 to 34 (APSNIASGPSSN) shows a compositional bias: polar residues.

It belongs to the PDCD5 family.

This is an uncharacterized protein from Schizosaccharomyces pombe (strain 972 / ATCC 24843) (Fission yeast).